We begin with the raw amino-acid sequence, 280 residues long: Ycf3-interacting protein 1, chloroplastic (280 aa).

Residues 1–62 (MTTQIFQLPL…NNRRFGSLIV (62 aa)) constitute a chloroplast transit peptide. The segment at 75 to 103 (PVPLTLEQQEKEKQNRDDEEDEIDEGDVD) is disordered. Residues 91–103 (DDEEDEIDEGDVD) show a composition bias toward acidic residues. Residues 255–275 (ALYFVSALPVIIGISVVLILF) form a helical membrane-spanning segment.

The protein belongs to the Y3IP1/CEST family. Interacts with Ycf3. As to expression, expressed in cotyledons, rosette and cauline leaves, stems and sepals.

Its subcellular location is the plastid. It is found in the chloroplast thylakoid membrane. Nuclear genome-encoded factor that participates in photosystem I (PSI) biogenesis. Cooperates with the plastid genome-encoded protein PSI assembly Ycf3 in the assembly of stable PSI units in the thylakoid membrane. Involved in light-induced chloroplast development and growth. Involved in the plant response to abiotic and photooxidative stresses. May be involved in the suppression of photooxidative damage. The polypeptide is Ycf3-interacting protein 1, chloroplastic (Arabidopsis thaliana (Mouse-ear cress)).